Reading from the N-terminus, the 90-residue chain is ATP synthase subunit c (90 aa).

2 consecutive transmembrane segments (helical) span residues 4–24 (FVYS…GCGI) and 53–73 (IGLA…LILI).

This sequence belongs to the ATPase C chain family. In terms of assembly, F-type ATPases have 2 components, F(1) - the catalytic core - and F(0) - the membrane proton channel. F(1) has five subunits: alpha(3), beta(3), gamma(1), delta(1), epsilon(1). F(0) has three main subunits: a(1), b(2) and c(10-14). The alpha and beta chains form an alternating ring which encloses part of the gamma chain. F(1) is attached to F(0) by a central stalk formed by the gamma and epsilon chains, while a peripheral stalk is formed by the delta and b chains.

The protein localises to the cell inner membrane. In terms of biological role, f(1)F(0) ATP synthase produces ATP from ADP in the presence of a proton or sodium gradient. F-type ATPases consist of two structural domains, F(1) containing the extramembraneous catalytic core and F(0) containing the membrane proton channel, linked together by a central stalk and a peripheral stalk. During catalysis, ATP synthesis in the catalytic domain of F(1) is coupled via a rotary mechanism of the central stalk subunits to proton translocation. Its function is as follows. Key component of the F(0) channel; it plays a direct role in translocation across the membrane. A homomeric c-ring of between 10-14 subunits forms the central stalk rotor element with the F(1) delta and epsilon subunits. The chain is ATP synthase subunit c from Syntrophobacter fumaroxidans (strain DSM 10017 / MPOB).